We begin with the raw amino-acid sequence, 669 residues long: RNA-binding protein 14 (669 aa).

2 consecutive RRM domains span residues 1-73 (MKIF…MSRP) and 79-149 (WKIF…LSTK). Residues Lys-126, Lys-135, Lys-138, Lys-149, and Lys-153 each participate in a glycyl lysine isopeptide (Lys-Gly) (interchain with G-Cter in SUMO2) cross-link. Disordered stretches follow at residues 148–175 (TKGQ…DTAF) and 193–232 (NSTG…PLTA). Phosphoserine is present on Ser-161. The residue at position 164 (Lys-164) is an N6-acetyllysine; alternate. A Glycyl lysine isopeptide (Lys-Gly) (interchain with G-Cter in SUMO2); alternate cross-link involves residue Lys-164. Thr-206 carries the post-translational modification Phosphothreonine. Phosphoserine is present on residues Ser-220, Ser-242, Ser-244, Ser-256, Ser-272, and Ser-280. Residues 284-303 (PYRGQLASPSSQSAAASSLG) are disordered. Residues 287–303 (GQLASPSSQSAAASSLG) show a composition bias toward low complexity. Residues 307–354 (GAQPSASALSSYGGQPAAASSLNSYGAQGSSLASYGNQPSSYGAQAAS) are TRBP-interacting domain; interaction with STIL. Residues Ser-520, Ser-523, Ser-527, and Ser-562 each carry the phosphoserine modification. Residues 569–590 (ANSTPPPYERTRLSPPRASYDD) are disordered. A Phosphothreonine modification is found at Thr-572. Ser-582 is modified (phosphoserine). Lys-600 is covalently cross-linked (Glycyl lysine isopeptide (Lys-Gly) (interchain with G-Cter in SUMO2)). Ser-618, Ser-620, Ser-623, Ser-627, Ser-643, and Ser-649 each carry phosphoserine.

Interacts with NCOA6, CITED1 and XRCC5/KU86. Interacts with SS18. Interacts with STIL and interferes with its interaction with CPAP. Interacts with gamma-tubulin. Part of the HDP-RNP complex composed of at least HEXIM1, PRKDC, XRCC5, XRCC6, paraspeckle proteins (SFPQ, NONO, PSPC1, RBM14, and MATR3) and NEAT1 RNA.

The protein localises to the nucleus. The protein resides in the nucleolus. Its subcellular location is the cytoplasm. In terms of biological role, may function as a nuclear receptor coactivator, enhancing transcription through other coactivators such as NCOA6 and CITED1. Regulates centriole biogenesis by suppressing the formation of aberrant centriolar protein complexes in the cytoplasm and thus preserving mitotic spindle integrity. Prevents the formation of the STIL-CPAP complex (which can induce the formation of aberrant centriolar protein complexes) by interfering with the interaction of STIL with CPAP. Plays a role in the regulation of DNA virus-mediated innate immune response by assembling into the HDP-RNP complex, a complex that serves as a platform for IRF3 phosphorylation and subsequent innate immune response activation through the cGAS-STING pathway. In Bos taurus (Bovine), this protein is RNA-binding protein 14 (RBM14).